Consider the following 246-residue polypeptide: MIKVGVFGALGRMGSEVVKAVEAADDTELVAGIDVGDDRGKVLGADVVVDFTHPDAVMDNLRWLIEHGIHAVVGTTGFDDARLAEVRRMLDAKPGVNVLIAPNFGIAAVLMMHFAAKAAPYFESAEIIELHHPNKADAPSGTAYRTAELIGAARAHAGLGDAPDATTSELPGARGAQVDGVRVHALRITGMIAHQEVVFGTHGETLRIRHDSMNRESFMPGVLLGVRKVASLPDRLTVGLESLLGL.

NAD(+)-binding positions include 8–13, aspartate 34, 74–76, and 101–104; these read GALGRM, GTT, and APNF. The active-site Proton donor/acceptor is the histidine 131. Histidine 132 contributes to the (S)-2,3,4,5-tetrahydrodipicolinate binding site. The Proton donor role is filled by lysine 135. 141–142 is a binding site for (S)-2,3,4,5-tetrahydrodipicolinate; the sequence is GT.

Belongs to the DapB family.

The protein localises to the cytoplasm. It carries out the reaction (S)-2,3,4,5-tetrahydrodipicolinate + NAD(+) + H2O = (2S,4S)-4-hydroxy-2,3,4,5-tetrahydrodipicolinate + NADH + H(+). It catalyses the reaction (S)-2,3,4,5-tetrahydrodipicolinate + NADP(+) + H2O = (2S,4S)-4-hydroxy-2,3,4,5-tetrahydrodipicolinate + NADPH + H(+). Its pathway is amino-acid biosynthesis; L-lysine biosynthesis via DAP pathway; (S)-tetrahydrodipicolinate from L-aspartate: step 4/4. In terms of biological role, catalyzes the conversion of 4-hydroxy-tetrahydrodipicolinate (HTPA) to tetrahydrodipicolinate. The polypeptide is 4-hydroxy-tetrahydrodipicolinate reductase (Thermobifida fusca (strain YX)).